Consider the following 259-residue polypeptide: Cell division protein FtsQ (259 aa).

Over methionine 1 to arginine 15 the chain is Cytoplasmic. Residues valine 16 to tryptophan 36 form a helical membrane-spanning segment. At arginine 37–glycine 259 the chain is on the periplasmic side. The region spanning valine 40–arginine 109 is the POTRA domain.

This sequence belongs to the FtsQ/DivIB family. FtsQ subfamily.

Its subcellular location is the cell inner membrane. Functionally, essential cell division protein. This chain is Cell division protein FtsQ, found in Salinibacter ruber (strain DSM 13855 / M31).